Here is a 215-residue protein sequence, read N- to C-terminus: Pyrrolidone-carboxylate peptidase (215 aa).

Catalysis depends on residues E80, C143, and H167.

The protein belongs to the peptidase C15 family. In terms of assembly, homotetramer.

Its subcellular location is the cytoplasm. The catalysed reaction is Release of an N-terminal pyroglutamyl group from a polypeptide, the second amino acid generally not being Pro.. Removes 5-oxoproline from various penultimate amino acid residues except L-proline. The chain is Pyrrolidone-carboxylate peptidase from Brevibacillus brevis (strain 47 / JCM 6285 / NBRC 100599).